The sequence spans 506 residues: Galactose/methyl galactoside import ATP-binding protein MglA (506 aa).

ABC transporter domains follow at residues 14–249 and 264–506; these read LEMS…VGRS and VILE…SLHL. 46 to 53 provides a ligand contact to ATP; the sequence is GENGAGKS.

Belongs to the ABC transporter superfamily. Galactose/methyl galactoside importer (TC 3.A.1.2.3) family. The complex is composed of one ATP-binding protein (MglA), two transmembrane proteins (MglC) and a solute-binding protein (MglB).

The protein localises to the cell inner membrane. It carries out the reaction D-galactose(out) + ATP + H2O = D-galactose(in) + ADP + phosphate + H(+). The enzyme catalyses methyl beta-D-galactoside(out) + ATP + H2O = methyl beta-D-galactoside(in) + ADP + phosphate + H(+). Its function is as follows. Part of the ABC transporter complex MglABC involved in galactose/methyl galactoside import. Responsible for energy coupling to the transport system. This is Galactose/methyl galactoside import ATP-binding protein MglA from Escherichia coli O157:H7.